Reading from the N-terminus, the 150-residue chain is Lipoprotein signal peptidase (150 aa).

2 helical membrane-spanning segments follow: residues 59–79 (VFVG…RYLP) and 84–101 (LLRL…GNLI). Catalysis depends on residues Asp111 and Asp125. Residues 117–137 (IWPVFNLADMAIVFGVIILCW) traverse the membrane as a helical segment.

This sequence belongs to the peptidase A8 family.

It is found in the cell membrane. It catalyses the reaction Release of signal peptides from bacterial membrane prolipoproteins. Hydrolyzes -Xaa-Yaa-Zaa-|-(S,diacylglyceryl)Cys-, in which Xaa is hydrophobic (preferably Leu), and Yaa (Ala or Ser) and Zaa (Gly or Ala) have small, neutral side chains.. It participates in protein modification; lipoprotein biosynthesis (signal peptide cleavage). Its function is as follows. This protein specifically catalyzes the removal of signal peptides from prolipoproteins. The protein is Lipoprotein signal peptidase of Moorella thermoacetica (strain ATCC 39073 / JCM 9320).